The chain runs to 123 residues: MLFHLSGLYSALYFLATLLMIVYKSQVFSYPCNCLALDLVLLLLMGILKVAQLYLGTKGNLMEAEVPLAASLAFTAVGGLLSVHFLLWQTLVLWMDSVLSTVLLVLHGLEAGLQVVVIADFIR.

The next 4 membrane-spanning stretches (helical) occupy residues 2–22, 35–55, 68–88, and 102–122; these read LFHL…LMIV, LALD…QLYL, LAAS…FLLW, and VLLV…ADFI.

The protein localises to the membrane. It localises to the cell projection. It is found in the cilium. The chain is Transmembrane protein 80 (Tmem80) from Mus musculus (Mouse).